The primary structure comprises 1076 residues: Nuclear factor of activated T-cells, cytoplasmic 3 (1076 aa).

Threonine 2 bears the N-acetylthreonine mark. The interval 110-115 is calcineurin-binding; sequence PSIQIT. A disordered region spans residues 206 to 307; sequence LGSPLTSPGG…PGHSPRGSVT (102 aa). 2 tandem repeats follow at residues 208 to 224 and 237 to 253. The interval 208 to 309 is 3 X SP repeats; the sequence is SPLTSPGGSP…HSPRGSVTED (102 aa). Residues 237–254 show a composition bias toward polar residues; that stretch reads SPRQSPCHSPRSSITDEN. Low complexity predominate over residues 257–271; sequence SPRPASGPSSRPTSP. A Nuclear localization signal motif is present at residues 274 to 276; sequence KRR. Residues 293–309 form repeat 3; that stretch reads SPVPSPGHSPRGSVTED. Serine 345 bears the Phosphoserine mark. The interval 359 to 390 is disordered; sequence CSDDQGSLSPSRETSVDDGLGSQYPLKKDSSG. Positions 362–371 are enriched in polar residues; that stretch reads DQGSLSPSRE. A Phosphoserine modification is found at serine 373. The 182-residue stretch at 416–597 folds into the RHD domain; sequence SSLPPLDWPL…IPVECSQRSA (182 aa). The DNA-binding element occupies 445 to 452; that stretch reads RAHYETEG. Positions 687-689 match the Nuclear localization signal motif; the sequence is KRK. Disordered stretches follow at residues 700–744 and 863–987; these read PVLM…ALSA and GHLL…GGLS. Over residues 713 to 722 the composition is skewed to low complexity; the sequence is LSSVPSLPVP. Composition is skewed to polar residues over residues 724 to 734 and 888 to 911; these read SAQTQRPSSDT and SAGQ…SHLQ. 2 stretches are compositionally biased toward low complexity: residues 917–939 and 946–965; these read PSHP…SSPI and QLQS…SPSP. A compositionally biased stretch (polar residues) spans 970–981; the sequence is HSGQHSTQAQST. Residues 1032–1041 carry the Nuclear export signal motif; sequence TLDDVNEIIG. The segment at 1049–1076 is disordered; sequence VSQGPEVIRDAPLPGPESPDVMSSNSAQ. Serine 1066 carries the phosphoserine modification.

NFATC proteins bind to DNA as monomers. Member of the multicomponent NFATC transcription complex that consists of at least two components, a pre-existing cytoplasmic component NFATC2 and an inducible nuclear component NFATC1. Other members such as NFATC4, or members of the activating protein-1 family, MAF, GATA4 and Cbp/p300 can also bind the complex. Component of a promoter-binding complex composed of STAT3, NFATC3 and NFATC4; complex formation is enhanced by calcineurin. Interacts with TRIM17; this interaction prevents NFATC3 nuclear localization. Interacts with and ubiquitinated by STUB1/CHIP; HSPA1A/HSP70 is required as a co-chaperone. Post-translationally, phosphorylated by NFATC-kinase; dephosphorylated by calcineurin. Ubiquitinated by STUB1/CHIP, leading to proteasomal degradation. Expressed in cardiomyocytes (at protein level).

The protein resides in the cytoplasm. It is found in the nucleus. In terms of biological role, acts as a regulator of transcriptional activation. Binds to the TNFSF11/RANKL promoter region and promotes TNFSF11 transcription. Binding to the TNFSF11 promoter region is increased by high levels of Ca(2+) which induce NFATC3 expression and may lead to regulation of TNFSF11 expression in osteoblasts. Plays a role in promoting mesenteric arterial wall remodeling in response to the intermittent hypoxia-induced increase in EDN1 and ROCK signaling. As a result NFATC3 colocalizes with F-actin filaments, translocates to the nucleus and promotes transcription of the smooth muscle hypertrophy and differentiation marker ACTA2. Promotes lipopolysaccharide-induced apoptosis and hypertrophy in cardiomyocytes. Following JAK/STAT signaling activation and as part of a complex with NFATC4 and STAT3, binds to the alpha-beta E4 promoter region of CRYAB and activates transcription in cardiomyocytes. In conjunction with NFATC4, involved in embryonic heart development via maintenance of cardiomyocyte survival, proliferation and differentiation. Plays a role in the inducible expression of cytokine genes in T-cells, especially in the induction of the IL-2. Required for thymocyte maturation during DN3 to DN4 transition and during positive selection. Positively regulates macrophage-derived polymicrobial clearance, via binding to the promoter region and promoting transcription of NOS2 resulting in subsequent generation of nitric oxide. Involved in Ca(2+)-mediated transcriptional responses upon Ca(2+) influx via ORAI1 CRAC channels. The polypeptide is Nuclear factor of activated T-cells, cytoplasmic 3 (Rattus norvegicus (Rat)).